The following is a 138-amino-acid chain: Ribosome maturation factor RimP (138 aa).

This sequence belongs to the RimP family.

It localises to the cytoplasm. Its function is as follows. Required for maturation of 30S ribosomal subunits. The sequence is that of Ribosome maturation factor RimP from Campylobacter curvus (strain 525.92).